Here is a 1151-residue protein sequence, read N- to C-terminus: MNTPAYAEIGITTNFSFLRGGSDPRAYVHQASILGISAIGIADHNTLAGVVRAYKELDNDKVLHKPKLLIGARIVFIDGTPDILVYPRDRAAYGRLCQLLTRGKRGDDVTRIEKGECRLTFSDLLAFSEGQLLVLTLPHRFEPAQALDVLAKLKATRAEGVWLAASLVHRGDDRRRLARLDDLATTAKVQLLATNEVLYHDPARRPLQDVLTCIREKTTIEAVGRKLEANAERFLKTPREMSRLFRDFPDAIAETMRFANKIDFSLDQLRYQYPDEPVPPGKTAQGHLEDLTWAGVDKYFAGKIDDKLRATLKKELALIAELKYAHYFLTVHDIVHYARSQNILCQGRGSAANSAVCYVLGITSVDPTKVDLLFERFISKERLEPPDIDVDFEHSRREEVMQYVYRRYGRHRAAIIATIIHYRPRSAIRDVGKALGLTEDVTAALADTVWGSWGSGLNDMQVKQAGLDPQNPMINLAVELATELIEFPRHLSQHVGGYVLTQDRLDTYVPIGNAAMDDRTFIEWDKDDVDALNMMKVDVLALGMLTCIRKCFDLIDQHKGERWVLASVPQDDPKVYDMLCDGESLGVFQVESRAQMNMLPRLKPRTFYDLVIEVAIVRPGPIQGDMVHPYLRRRNGQEKVNYPSPSPEHGPADELYKVLHKTKGVPLFQEQAMRIAIEAAKFTSEEANGLRRSMATFRNVGTIGKYEDKLIGNMVARGYDPNFARSCFDQIKGFGSYGFPESHAASFAQLVYISSWLKYHHPDAFCCGLLNSQPMGFYAPAQIVGDARKNGVEVRDIDVSYSFAQNTLEQGSGKYCAVRLGFRQIDGFHWLDEDEEHLKRSLLSFRGAPLGANPESIGPHMPGGMDSGLDAGASPRNDKKEDWANRIVAARNRRPFTSLEDFARDTGLPKRALILLADADAFRSLGLDRREALWQVRRLPDDVPLPLFEAATAREQPDEHAKPLPLMPRPEQVVADYQTIRLSLKGHPMEFLREMLSRERVVACKDVNHQNERRRVRCAGVVLVRQRPGSASGVVFMTLEDETGIANVVVWPKIMEQYRKEVMGARLILVEGYIQSSPEKVTHLIAQRMVDRSHDLIGLANDSLTRKHPVPSGDALIEPLNDDRRDHADAPAQKIRHPRNVRILPPSRDFH.

The segment at 1108–1151 is disordered; that stretch reads HPVPSGDALIEPLNDDRRDHADAPAQKIRHPRNVRILPPSRDFH.

It belongs to the DNA polymerase type-C family. DnaE2 subfamily.

The protein resides in the cytoplasm. The catalysed reaction is DNA(n) + a 2'-deoxyribonucleoside 5'-triphosphate = DNA(n+1) + diphosphate. Functionally, DNA polymerase involved in damage-induced mutagenesis and translesion synthesis (TLS). It is not the major replicative DNA polymerase. The sequence is that of Error-prone DNA polymerase from Bradyrhizobium diazoefficiens (strain JCM 10833 / BCRC 13528 / IAM 13628 / NBRC 14792 / USDA 110).